The primary structure comprises 544 residues: High affinity immunoglobulin alpha and immunoglobulin mu Fc receptor (544 aa).

The N-terminal stretch at 1 to 16 is a signal peptide; that stretch reads MPLFLILCLLQGSSFA. At 17 to 462 the chain is on the extracellular side; sequence LPQKRPHPRW…TFPEDESSSR (446 aa). In terms of domain architecture, Ig-like V-type spans 61-169; the sequence is PNALKGSRLV…NMLFLSMNLT (109 aa). Residues 75 to 97 form a mediates immunoglobulin Fc fragment-binding region; it reads GGAVTIQCHYAPSSVNRHQRKYW. Cys82 and Cys153 form a disulfide bridge. An N-linked (GlcNAc...) asparagine glycan is attached at Asn167. Residues 218-325 are disordered; the sequence is DTVASTPGTS…TTKADRPRED (108 aa). 2 stretches are compositionally biased toward polar residues: residues 220–232 and 280–291; these read VASTPGTSMTTAS and ASKSRSMSNTTE. Positions 307-325 are enriched in basic and acidic residues; it reads ASKDRREITTTKADRPRED. The helical transmembrane segment at 463–483 threads the bilayer; sequence TLAPVSTMLALFMLMALVLLQ. The Cytoplasmic segment spans residues 484–544; the sequence is RKLRRRRTSQ…LTAPERNPGP (61 aa). A disordered region spans residues 511–544; sequence PQPDQLPHVERKMLQDDSLPAGASLTAPERNPGP.

As to quaternary structure, interacts with IGHM; this interaction facilitates the endocytosis of IgM-coated microbes or IgM-antigen immune complexes. N-glycosylated.

It is found in the cell membrane. Functions as a receptor for the Fc fragment of IgA and IgM. Binds IgA and IgM with high affinity and mediates their endocytosis. May function in the immune response to microbes mediated by IgA and IgM. The protein is High affinity immunoglobulin alpha and immunoglobulin mu Fc receptor (FCAMR) of Pongo abelii (Sumatran orangutan).